Reading from the N-terminus, the 657-residue chain is Endoplasmic reticulum chaperone BiP homolog (657 aa).

An N-terminal signal peptide occupies residues 1 to 17; sequence MKVFSLILIAFVANAYC. Residues 38–41, lysine 99, 229–231, 295–302, and 366–369 each bind ATP; these read GTTY, GGT, EKAKRALS, and GSTR. Residues 128 to 282 are nucleotide-binding (NBD); it reads KPNVEVKVGS…KKKSGKDLRK (155 aa). The segment at 402 to 502 is substrate-binding (SBD); that stretch reads VQAGVIGGVE…PRGVPQIEVT (101 aa). Residues 607-657 are disordered; the sequence is LGSNQDASTEENKEQKKELESVVQPIVSKLYSAGGQGEQASEEPSEDHDEL. The segment covering 616–626 has biased composition (basic and acidic residues); that stretch reads EENKEQKKELE. A compositionally biased stretch (acidic residues) spans 646–657; sequence ASEEPSEDHDEL. The Prevents secretion from ER motif lies at 654–657; the sequence is HDEL.

This sequence belongs to the heat shock protein 70 family.

Its subcellular location is the endoplasmic reticulum lumen. It carries out the reaction ATP + H2O = ADP + phosphate + H(+). Its activity is regulated as follows. The chaperone activity is regulated by ATP-induced allosteric coupling of the nucleotide-binding (NBD) and substrate-binding (SBD) domains. In the ADP-bound and nucleotide-free (apo) states, the two domains have little interaction. In contrast, in the ATP-bound state the two domains are tightly coupled, which results in drastically accelerated kinetics in both binding and release of polypeptide substrates. J domain-containing co-chaperones stimulate the ATPase activity and are required for efficient substrate recognition. Endoplasmic reticulum chaperone that plays a key role in protein folding and quality control in the endoplasmic reticulum lumen. Required for ER dynamics during the first embryonic cell divisions. Specifically, controls ER transition into sheet-like structures at the onset of mitosis, possibly by regulating homotypic membrane fusion. The chain is Endoplasmic reticulum chaperone BiP homolog (hsp-4) from Caenorhabditis elegans.